A 31-amino-acid polypeptide reads, in one-letter code: Alpha-conotoxin Li1.12 (31 aa).

A propeptide spanning residues 1 to 15 (AGNAKMSALMALTIR) is cleaved from the precursor. Disulfide bonds link C17/C23 and C18/C30. C30 carries the post-translational modification Cysteine amide.

The protein belongs to the conotoxin A superfamily. As to expression, expressed by the venom duct.

The protein resides in the secreted. Functionally, alpha-conotoxins act on postsynaptic membranes, they bind to the nicotinic acetylcholine receptors (nAChR) and thus inhibit them. This toxin inhibits alpha-3-beta-4, alpha-6/alpha-3-beta-4, and alpha-2-beta-4 nAChRs. This Conus lividus (Livid cone) protein is Alpha-conotoxin Li1.12.